Reading from the N-terminus, the 610-residue chain is Protein arginine N-methyltransferase 5 (610 aa).

The region spanning Leu284 to Trp587 is the SAM-dependent MTase PRMT-type domain. Tyr300 is an S-adenosyl-L-methionine binding site. Position 303 (Phe303) interacts with a protein. Residues Lys309–Tyr310, Glu368, and Asp396–Met397 contribute to the S-adenosyl-L-methionine site. A protein is bound by residues Glu412 and Glu421. Active-site proton donor/acceptor residues include Glu412 and Glu421. Residues Ala470 to Leu610 form an interaction with vls region.

The protein belongs to the class I-like SAM-binding methyltransferase superfamily. Protein arginine N-methyltransferase family. In terms of assembly, interacts with vls. As to expression, expressed only in ovaries.

Its subcellular location is the cytoplasm. Its function is as follows. Arginine methyltransferase that can both catalyze the formation of omega-N monomethylarginine (MMA) and symmetrical dimethylarginine (sDMA). Specifically mediates the symmetrical dimethylation of arginine residues in the small nuclear ribonucleoproteins SmD1 and SmD3. Required for arginine symmetrical dimethylation of piwi family proteins, piwi, aub and AGO3, during germline development. Required during oogenesis for pole cell formation in the pathway controlled by oskar (osk) and for abdominal segments during early embryogenesis. Involved in nanos (nos) and germ cell mRNAs localization. This chain is Protein arginine N-methyltransferase 5, found in Drosophila melanogaster (Fruit fly).